A 285-amino-acid polypeptide reads, in one-letter code: Eukaryotic translation initiation factor 2 subunit beta (285 aa).

Residues 30-69 form a disordered region; that stretch reads DAAVNGKENGSGDDLFAGLKKKKKKSKSVSADAEAEKEPT. S40 carries the phosphoserine modification. A Phosphothreonine modification is found at T69. Phosphoserine is present on residues S80, S92, and S112. The residue at position 116 (T116) is a Phosphothreonine. At S118 the chain carries Phosphoserine. The segment at 236 to 262 adopts a C4-type zinc-finger fold; sequence CKTCKSINTELKREQSNRLFFMVCKSC.

It belongs to the eIF-2-beta/eIF-5 family. As to quaternary structure, eukaryotic translation initiation factor 2 eIF2 is a heterotrimeric complex composed of an alpha, a beta and a gamma subunit. The factors eIF-1, eIF-2, eIF-3, TIF5/eIF-5 and methionyl-tRNAi form a multifactor complex (MFC) that may bind to the 40S ribosome. Interacts with GCD6. Interacts with GCD1. Interacts with TIF5/eIF-5. Interacts with CDC123.

It localises to the cytoplasm. Its subcellular location is the cytosol. Its function is as follows. Component of the eIF2 complex that functions in the early steps of protein synthesis by forming a ternary complex with GTP and initiator tRNA. This complex binds to a 40S ribosomal subunit, followed by mRNA binding to form a 43S pre-initiation complex (43S PIC). Junction of the 60S ribosomal subunit to form the 80S initiation complex is preceded by hydrolysis of the GTP bound to eIF2 and release of an eIF2-GDP binary complex. In order for eIF2 to recycle and catalyze another round of initiation, the GDP bound to eIF2 must exchange with GTP by way of a reaction catalyzed by eIF2B. The protein is Eukaryotic translation initiation factor 2 subunit beta (SUI3) of Saccharomyces cerevisiae (strain ATCC 204508 / S288c) (Baker's yeast).